A 42-amino-acid chain; its full sequence is Packaging protein P20 (42 aa).

A helical membrane pass occupies residues 11-31; that stretch reads INWLIVILMLTIAGMAATLVC.

Heterodimer of P20 and P22; further multimerizes as hexamers of heterodimers. Part of the dodecameric portal complex that is composed of the packaging efficiency factor P6, the DNA packaging ATPase P9, and the internal heterododecamer P20/P22 which spans the virion inner membrane.

The protein localises to the virion membrane. Together with P22, forms the internal part of the portal complex embeded in the virion internal membrane and which plays critical roles in genome packaging and genome ejection. Both proteins multimerize as a single ring-shaped heterdodecamer arranged around a central channel and interact with the P6/P9 external part of the portal. This is Packaging protein P20 (XX) from Acinetobacter calcoaceticus (Arthrobacter siderocapsulatus).